A 100-amino-acid chain; its full sequence is Urease subunit gamma (100 aa).

It belongs to the urease gamma subunit family. As to quaternary structure, heterotrimer of UreA (gamma), UreB (beta) and UreC (alpha) subunits. Three heterotrimers associate to form the active enzyme.

It is found in the cytoplasm. It catalyses the reaction urea + 2 H2O + H(+) = hydrogencarbonate + 2 NH4(+). Its pathway is nitrogen metabolism; urea degradation; CO(2) and NH(3) from urea (urease route): step 1/1. This is Urease subunit gamma from Acinetobacter baumannii (strain SDF).